A 568-amino-acid chain; its full sequence is MDQDAFFFERDPEAEGEAPRKQESLSGVIGLLDVVLSYKPTEIGEDRSWLHGIIDNPEENKPSCKADDNNKDRAISTPTQDHRSGEESGISRRTSESKTETHARLLDQQSIHRASRRGTSPNPLPENMGNERNTRIDEDSPNERRHQRSVLTDEDRKMAEDSNKREEDQVEGFPEEIRRSTPLSDDGESRTNNNGRSMETSSTHSTRITDVIINPSPELEDAVLQRNKRRPTIIRRNQTRSERTQNSELHKSTSENSSNLEDHNTKTSPKGLPPKNEESAATPKNNHNHRKTKYTMNNANNNTKSPPTPEHDTTANEEETSNTSVDEMAKLLVSLGVMKSQHEFELSRSASHVFAKRMLKSANYKEMTFNLCGMLISVEKSLENKVEENRTLLKQIQEEINSSRDLHKRFSEYQKEQNSLMMANLSTLHIITDRGGKTGDPSDTTRSPSVFTKGKDNKVKKTRFDPSMEALGGQEFKPDLIREDELRDDIKNPVLEENNNDLQASNASRLIPSTEKHTLHSLKLVIENSPLSRVEKKAYIKSLYKCRTNQEVKNVMELFEEDIDSLTN.

The tract at residues 1–24 (MDQDAFFFERDPEAEGEAPRKQES) is disordered. Basic and acidic residues predominate over residues 7–23 (FFERDPEAEGEAPRKQE). The segment at 33-41 (DVVLSYKPT) is N0 binding. The segment at 45-324 (EDRSWLHGII…ANEEETSNTS (280 aa)) is disordered. The segment covering 58-105 (EENKPSCKADDNNKDRAISTPTQDHRSGEESGISRRTSESKTETHARL) has biased composition (basic and acidic residues). Over residues 107–121 (DQQSIHRASRRGTSP) the composition is skewed to polar residues. Composition is skewed to basic and acidic residues over residues 132-144 (RNTRIDEDSPNER) and 151-167 (LTDEDRKMAEDSNKREE). Over residues 190-208 (RTNNNGRSMETSSTHSTRI) the composition is skewed to polar residues. The segment covering 239-253 (TRSERTQNSELHKST) has biased composition (basic and acidic residues). Residues 294–305 (YTMNNANNNTKS) are compositionally biased toward polar residues. The tract at residues 344–411 (FELSRSASHV…SSRDLHKRFS (68 aa)) is multimerization. A coiled-coil region spans residues 387-416 (EENRTLLKQIQEEINSSRDLHKRFSEYQKE). The tract at residues 412–445 (EYQKEQNSLMMANLSTLHIITDRGGKTGDPSDTT) is l protein binding. The disordered stretch occupies residues 434–455 (RGGKTGDPSDTTRSPSVFTKGK). Residues 441 to 450 (PSDTTRSPSV) show a composition bias toward polar residues. The tract at residues 479 to 568 (DLIREDELRD…FEEDIDSLTN (90 aa)) is interaction with the nucleocapsid (N-RNA).

This sequence belongs to the respirovirus P protein family. Homotetramer. Interacts (via multimerization domain) with polymerase L; this interaction forms the polymerase complex. Interacts (via N-terminus) with N0; this interaction allows P to chaperon N0 before encapsidation and form the N-P complex. Interacts (via C-terminus) with N-RNA template; this interaction positions the polymerase on the template.

Essential cofactor of the RNA polymerase L that plays a central role in the transcription and replication by forming the polymerase complex with RNA polymerase L and recruiting L to the genomic N-RNA template for RNA synthesis. Also plays a central role in the encapsidation of nascent RNA chains by forming the encapsidation complex with the nucleocapsid protein N (N-P complex). Acts as a chaperone for newly synthesized free N protein, so-called N0, allowing encapsidation of nascent RNA chains during replication. The nucleoprotein protein N prevents excessive phosphorylation of P, which leads to down-regulation of viral transcription/ replication. Participates, together with N, in the formation of viral factories (viroplasms), which are large inclusions in the host cytoplasm where replication takes place. Recruits host PI4KB and remodel the host endoplasmic reticulum membrane to form viral replication factories. In Human parainfluenza 1 virus (strain C39) (HPIV-1), this protein is Phosphoprotein (P/C).